A 193-amino-acid chain; its full sequence is Putative F-box protein At1g31072 (193 aa).

The F-box domain occupies 4–53 (EKTLDSIPIDVFLDIFSRLPAKSVGRSCCVSNRWASILGSQDFKELFLTM).

The chain is Putative F-box protein At1g31072 from Arabidopsis thaliana (Mouse-ear cress).